The chain runs to 373 residues: MKYAAALTAVAALAARAAAVGVSGTPVGFASSATGGGDATPVYPTTTDELVSYLGDDEARVIVLSKTFDFTDTEGTTTTTGCAPWGTASGCQLAINKDDWCTNYEPDAPTTTVTYNTAGELGITVNSNKSLIGEGTSGVIKGRGLRMVSGVSNIIIQNIAVTDINPEYVWGGDAITLDEADLVWIDHVTTARIGRQHYVLGTDADSRVSITNNYINGESDYSATCDGHHYWNVYLDGSSDKVTFSGNYLYKTSGRAPKVQDNTYLHIYNNYWENNSGHAFEIGSGGYVLAEGNYFSNVDTVLETDTFEGALFSSDSASSTCESYIGRSCVANVNGGDLTGTSTTVLSNLSGDTLPSADAASTSPASNAGQGNL.

A signal peptide spans 1–24 (MKYAAALTAVAALAARAAAVGVSG). Cystine bridges form between C82–C101 and C91–C225. N128 is a glycosylation site (N-linked (GlcNAc...) asparagine). R255 is a catalytic residue. N-linked (GlcNAc...) asparagine glycosylation occurs at N274. An intrachain disulfide couples C321 to C329. N-linked (GlcNAc...) asparagine glycosylation occurs at N348. The span at 354-366 (LPSADAASTSPAS) shows a compositional bias: low complexity. The interval 354–373 (LPSADAASTSPASNAGQGNL) is disordered.

This sequence belongs to the polysaccharide lyase 1 family.

Its subcellular location is the secreted. The enzyme catalyses Eliminative cleavage of (1-&gt;4)-alpha-D-galacturonan methyl ester to give oligosaccharides with 4-deoxy-6-O-methyl-alpha-D-galact-4-enuronosyl groups at their non-reducing ends.. In terms of biological role, pectinolytic enzymes consist of four classes of enzymes: pectin lyase, polygalacturonase, pectin methylesterase and rhamnogalacturonase. Among pectinolytic enzymes, pectin lyase is the most important in depolymerization of pectin, since it cleaves internal glycosidic bonds of highly methylated pectins. This chain is Probable pectin lyase D (pelD), found in Aspergillus niger (strain ATCC MYA-4892 / CBS 513.88 / FGSC A1513).